A 380-amino-acid chain; its full sequence is Acyl-lipid (9+3)-(E)-desaturase (380 aa).

The tract at residues 1–25 (MGAGGCISVSETKPNQKNSLERAPY) is disordered. Residues 9–18 (VSETKPNQKN) are compositionally biased toward polar residues. Helical transmembrane passes span 52–72 (LSYV…TTYF) and 81–101 (ALAW…VWVI). The short motif at 103–107 (HECGH) is the Histidine box-1 element. The short motif at 139-143 (HRRHH) is the Histidine box-2 element. 3 helical membrane passes run 177 to 197 (IGVL…FNVS), 223 to 243 (IYLS…AAMV), and 247 to 267 (VWLI…LVLV). The Histidine box-3 signature appears at 313 to 317 (HIVHH).

It belongs to the fatty acid desaturase type 1 family.

It localises to the membrane. It catalyses the reaction a (9Z)-octadecenoyl-containing glycerolipid + 2 Fe(II)-[cytochrome b5] + O2 + 2 H(+) = a (9Z,12E)-octadecadienoyl-containing glycerolipid + 2 Fe(III)-[cytochrome b5] + 2 H2O. The enzyme catalyses a (9Z)-hexadecenoyl-containing glycerolipid + 2 Fe(II)-[cytochrome b5] + O2 + 2 H(+) = a (9Z,12E)-hexadecadienoyl-containing glycerolipid + 2 Fe(III)-[cytochrome b5] + 2 H2O. In terms of biological role, involved in the biosynthesis of dimorphecolic acid (9-OH-18:2(10E,12E)). Converts oleic acid (18:1(9Z)) into 18:2(9Z,12E) and probably palmitoleic acid (16:1(9Z)) into 16:2(9Z,12E). Very limited ability to catalyze (Z)-delta(12) desaturation. The sequence is that of Acyl-lipid (9+3)-(E)-desaturase from Dimorphotheca sinuata (African daisy).